We begin with the raw amino-acid sequence, 195 residues long: Sec-independent protein translocase protein TatB (195 aa).

The chain crosses the membrane as a helical span at residues 2–22; sequence FSNVGWGEVLVLLIVALFLIG. The span at 103-125 shows a compositional bias: basic and acidic residues; it reads VKDTVDTVRKPNLRESLKADKTK. Positions 103 to 195 are disordered; that stretch reads VKDTVDTVRK…APGYGWEDVT (93 aa). Composition is skewed to polar residues over residues 127–139 and 146–155; these read SAQP…SGSA and VTQQSNAGES.

The protein belongs to the TatB family. As to quaternary structure, the Tat system comprises two distinct complexes: a TatABC complex, containing multiple copies of TatA, TatB and TatC subunits, and a separate TatA complex, containing only TatA subunits. Substrates initially bind to the TatABC complex, which probably triggers association of the separate TatA complex to form the active translocon.

The protein resides in the cell membrane. Functionally, part of the twin-arginine translocation (Tat) system that transports large folded proteins containing a characteristic twin-arginine motif in their signal peptide across membranes. Together with TatC, TatB is part of a receptor directly interacting with Tat signal peptides. TatB may form an oligomeric binding site that transiently accommodates folded Tat precursor proteins before their translocation. The polypeptide is Sec-independent protein translocase protein TatB (Corynebacterium jeikeium (strain K411)).